The primary structure comprises 490 residues: 5'-3' exonuclease PLD3 (490 aa).

The Cytoplasmic segment spans residues 1 to 38 (MKPKLMYQELKVPAEEPASELPMNEIEAWKAAEKKARW). A helical; Signal-anchor for type II membrane protein transmembrane segment spans residues 39–59 (VLLVLILAVVGFGALMTQLFL). Residues 60–490 (WEYGDLHLFG…DSVGNACRLL (431 aa)) are Lumenal-facing. 2 disulfide bridges follow: Cys-77/Cys-239 and Cys-81/Cys-237. 2 N-linked (GlcNAc...) asparagine glycosylation sites follow: Asn-97 and Asn-132. The PLD phosphodiesterase 1 domain maps to 196–223 (THGVLHTKFWVVDQTHFYLGSANMDWRS). Residues His-201, Lys-203, and Asp-208 contribute to the active site. His-201 serves as the catalytic Proton donor. Phosphate is bound by residues His-201 and Lys-203. Residue Asn-218 participates in phosphate binding. 3 N-linked (GlcNAc...) asparagine glycosylation sites follow: Asn-236, Asn-284, and Asn-387. Cys-366 and Cys-487 form a disulfide bridge. One can recognise a PLD phosphodiesterase 2 domain in the interval 411–437 (YARVNHNKYMVTERATYIGTSNWSGSY). His-416 contributes to the phosphate binding site. His-416 functions as the Nucleophile in the catalytic mechanism. Phe-438 provides a ligand contact to Mg(2+).

The protein belongs to the phospholipase D family. In terms of assembly, homodimer. Interacts with APP. N-glycosylated. In terms of processing, proteolytically processed to a soluble form that is stable within endosomes and lysosomes. During transport through the secretory pathway becomes proteolysed by cysteine proteases, thereby releasing a stable soluble lysosomal lumenal polypeptide, whereas the transmembrane-bound fragment is rapidly degraded. Its transport route to lysosomes involves ubiquitination and the ESCRT complex. Post-translationally, ubiquitinated. Ubiquitination mediates sorting into lysosomes.

The protein localises to the endoplasmic reticulum membrane. It is found in the lysosome lumen. It localises to the early endosome membrane. Its subcellular location is the late endosome membrane. The protein resides in the golgi apparatus membrane. The protein localises to the endosome membrane. It catalyses the reaction Exonucleolytic cleavage in the 5'- to 3'-direction to yield nucleoside 3'-phosphates.. The enzyme catalyses a 5'-end 5'-dephospho-ribonucleotidyl-ribonucleotide-RNA + H2O = a ribonucleoside 3'-phosphate + a 5'-end dephospho-ribonucleoside-RNA + H(+). It carries out the reaction a ribonucleoside 3'-phosphate-2'-3'-cyclophospho-GMP + H2O = a ribonucleoside 3'-phosphate + 2',3'-cyclophospho-GMP + H(+). The catalysed reaction is a 5'-end 5'-dephospho-2'-deoxyribonucleotidyl-2'-deoxyribonucleotide in single-stranded DNA + H2O = a 5'-end dephospho-2'-deoxyribonucleoside in single-stranded DNA + a 2'-deoxyribonucleoside 3'-phosphate + H(+). It catalyses the reaction a 5'-end 5'-phospho-2'-deoxyribonucleotide in single-stranded DNA + H2O = a 5'-end 5'-dephospho-2'-deoxyribonucleotide in single-stranded DNA + phosphate. The enzyme catalyses a 3-lyso-sn-glycero-1-phospho-(3'-acyl-1'-sn-glycerol) + a 1-acyl-sn-glycerol = a 3-acyl-sn-glycero-1-phospho-(3'-acyl-1'-sn-glycerol) + glycerol. It carries out the reaction 3-lyso-sn-glycero-1-phospho-(3'-(9Z-octadecenoyl)-1'-sn-glycerol) + 1-(9Z-octadecenoyl)-sn-glycerol = 3-(9Z-octadecenoyl)-sn-glycero-1-phospho-(3'-(9Z-octadecenoyl)-1'-sn-glycerol) + glycerol. Its function is as follows. 5'-&gt;3' exonuclease that hydrolyzes the phosphodiester bond of single-stranded DNA (ssDNA) and RNA molecules to form nucleoside 3'-monophosphates and 5'-end 5'-hydroxy deoxyribonucleotide/ribonucleotide fragments. Partially redundant with PLD4, can cleave all four nucleotides displaying higher efficiency for ssDNA and RNA fragments initiated with uridine and guanosine residues and lower efficiency for cytidine-initiated substrates. As a result, it does not always degrade polynucleotides to the single nucleotide level, it can stall at specific sites sparing certain fragments from exonucleolytic degradation. Processes self and pathogenic ssDNA and RNA molecules that reach the endolysosomal compartment via phagocytosis or autophagy and may serve as 'danger' signals for recognition by innate immune receptors such as toll-like receptors (TLRs). Degrades mitochondrial CpG-rich ssDNA fragments to prevent TLR9 activation and autoinflammatory response, but it can cleave viral RNA to generate ligands for TLR7 activation and initiate antiviral immune responses. In plasmacytoid dendritic cells, it cooperates with endonuclease RNASET2 to release 2',3'-cyclic guanosine monophosphate (2',3'-cGMP), a potent stimulatory ligand for TLR7. Produces 2',3'-cGMPs and cytidine-rich RNA fragments that occupy TLR7 ligand-binding pockets and trigger a signaling-competent state. Can exert polynucleotide phosphatase activity toward 5'-phosphorylated ssDNA substrates although at a slow rate. Transphosphatidylase that catalyzes the exchange with R to S stereo-inversion of the glycerol moiety between (S,R)-lysophosphatidylglycerol (LPG) and monoacylglycerol (MAG) substrates to yield (S,S)-bis(monoacylglycero)phosphate (BMP). Can synthesize a variety of (S,S)-BMPs representing the main phospholipid constituent of lysosomal intralumenal vesicle (ILV) membranes that bind acid hydrolases for lipid degradation. Regulates the homeostasis and interorganellar communication of the endolysosomal system with an overall impact on cellular removal of dysfunctional organelles via autophagy as well as proper protein and lipid turnover. May play a role in myotube formation in response to ER stress. The polypeptide is 5'-3' exonuclease PLD3 (PLD3) (Bos taurus (Bovine)).